The following is a 371-amino-acid chain: RNA-binding protein 48 (371 aa).

Residues 46–124 (QYLLIQGVPA…GLLHVCYAPE (79 aa)) form the RRM domain. Disordered regions lie at residues 220 to 249 (EHTDKASDSCNSARNRGELQKHRDHSAFPP) and 343 to 371 (EVTSSVPKPPEDNGEDVCTSHPRKQRRRI).

This sequence belongs to the RBM48 family. As to quaternary structure, component of the minor spliceosome. Within this complex, interacts with ARMC7 and PRPF8/PRP8.

Functionally, as a component of the minor spliceosome, involved in the splicing of U12-type introns in pre-mRNAs. In Rattus norvegicus (Rat), this protein is RNA-binding protein 48 (Rbm48).